Here is a 462-residue protein sequence, read N- to C-terminus: Sugar transporter ERD6-like 2 (462 aa).

Transmembrane regions (helical) follow at residues 23 to 43, 70 to 90, 96 to 116, 123 to 143, 156 to 176, 178 to 198, 261 to 281, 296 to 316, 324 to 344, 357 to 377, 397 to 417, and 423 to 443; these read SGLL…GCAM, VMTL…ALVG, WISD…HDII, LFLG…IAEI, NQLL…FFHW, TLAL…FFIP, LIIG…AISA, IGTT…MLTV, LLMI…LSYY, VMLI…LGGL, LVTM…NFMI, and GTYF…WTLV.

Belongs to the major facilitator superfamily. Sugar transporter (TC 2.A.1.1) family.

The protein localises to the membrane. Sugar transporter. The sequence is that of Sugar transporter ERD6-like 2 (SUGTL3) from Arabidopsis thaliana (Mouse-ear cress).